A 129-amino-acid polypeptide reads, in one-letter code: Fluoride-specific ion channel FluC 2 (129 aa).

Residues 19 to 39 form a helical membrane-spanning segment; the sequence is GLGLVVPAAAVGGFPLGTLFI. Na(+) is bound by residues glycine 74 and threonine 77. Residues 95 to 115 form a helical membrane-spanning segment; that stretch reads FGMAAVYIAASLFGGLLASWA.

Belongs to the fluoride channel Fluc/FEX (TC 1.A.43) family.

It is found in the cell membrane. The catalysed reaction is fluoride(in) = fluoride(out). Its activity is regulated as follows. Na(+) is not transported, but it plays an essential structural role and its presence is essential for fluoride channel function. Functionally, fluoride-specific ion channel. Important for reducing fluoride concentration in the cell, thus reducing its toxicity. This Geobacillus kaustophilus (strain HTA426) protein is Fluoride-specific ion channel FluC 2.